The sequence spans 358 residues: Chorismate synthase (358 aa).

Arginine 46 lines the NADP(+) pocket. FMN is bound by residues 123 to 125 (RSS), 235 to 236 (NA), glycine 275, 290 to 294 (KPTPS), and arginine 316.

Belongs to the chorismate synthase family. In terms of assembly, homotetramer. FMNH2 is required as a cofactor.

It carries out the reaction 5-O-(1-carboxyvinyl)-3-phosphoshikimate = chorismate + phosphate. It functions in the pathway metabolic intermediate biosynthesis; chorismate biosynthesis; chorismate from D-erythrose 4-phosphate and phosphoenolpyruvate: step 7/7. In terms of biological role, catalyzes the anti-1,4-elimination of the C-3 phosphate and the C-6 proR hydrogen from 5-enolpyruvylshikimate-3-phosphate (EPSP) to yield chorismate, which is the branch point compound that serves as the starting substrate for the three terminal pathways of aromatic amino acid biosynthesis. This reaction introduces a second double bond into the aromatic ring system. The protein is Chorismate synthase of Helicobacter hepaticus (strain ATCC 51449 / 3B1).